A 572-amino-acid chain; its full sequence is Delta-1-pyrroline-5-carboxylate dehydrogenase, mitochondrial (572 aa).

Residue 300–305 (GQISTR) coordinates NAD(+). Residue E320 is the Proton acceptor of the active site. C354 serves as the catalytic Nucleophile.

Belongs to the aldehyde dehydrogenase family.

The protein localises to the mitochondrion matrix. It catalyses the reaction L-glutamate 5-semialdehyde + NAD(+) + H2O = L-glutamate + NADH + 2 H(+). It participates in amino-acid degradation; L-proline degradation into L-glutamate; L-glutamate from L-proline: step 2/2. The polypeptide is Delta-1-pyrroline-5-carboxylate dehydrogenase, mitochondrial (prnC) (Emericella nidulans (strain FGSC A4 / ATCC 38163 / CBS 112.46 / NRRL 194 / M139) (Aspergillus nidulans)).